The chain runs to 53 residues: Neuronal protein NP-190 (53 aa).

In terms of tissue distribution, mainly expressed in the fetal brain where it is specifically localized to the proximal axonal segments, cell bodies and growth cones. Lower level of expression was also detected in the fetal heart and the skeletal muscle. No expression in kidney, liver, lung or spleen.

It localises to the membrane. Neuronal antigen that may play a role in brain development. May be involved in neurite formation or axonal guidance. This is Neuronal protein NP-190 from Sus scrofa (Pig).